The primary structure comprises 691 residues: Pentatricopeptide repeat-containing protein ATP4, chloroplastic (691 aa).

Residues 1–17 (MASLPLCRSPSSLLPSW) are compositionally biased toward low complexity. The transit peptide at 1-35 (MASLPLCRSPSSLLPSWPHRPISASFNPKNPSSPV) directs the protein to the chloroplast. The tract at residues 1–76 (MASLPLCRSP…SSNTRFLWVN (76 aa)) is disordered. The segment covering 24 to 33 (ASFNPKNPSS) has biased composition (polar residues). Positions 45–56 (PPQPQDPSPPSD) are enriched in pro residues. Polar residues predominate over residues 61–76 (GTRPSSSSNTRFLWVN). 10 PPR repeats span residues 163 to 197 (KVIL…GVQP), 198 to 232 (DNAT…GCSP), 233 to 267 (DMLT…KWQL), 268 to 302 (DPVI…GVRP), 303 to 337 (NLVV…QVQP), 338 to 372 (SRAT…AMGI), 373 to 403 (DVML…MKAS), 411 to 445 (DSWS…GFKP), 446 to 480 (NIFV…GIIP), and 546 to 580 (KMPY…GIYA). The 86-residue stretch at 592–677 (LHLRGLSVGA…WFLTTNVAAK (86 aa)) folds into the Smr domain.

The protein belongs to the PPR family. P subfamily.

It localises to the plastid. The protein localises to the chloroplast stroma. Involved in translation and accumulation of chloroplast ATP synthase subunits. Interacts with the 5'-UTR of the chloroplast bicistronic atpB and atpE mRNA and activates its translation by facilitating ribosome association with the mRNA. Required for accumulation and activity of the chloroplast ATP synthase. Enhances atpA translation and is required for accumulation of specific processed atpF and psaJ transcripts. Required for the stabilization of bicistronic rpl16 and rpl14 mRNAs. In Zea mays (Maize), this protein is Pentatricopeptide repeat-containing protein ATP4, chloroplastic.